The following is a 316-amino-acid chain: Acetaldehyde dehydrogenase (316 aa).

11 to 14 (SGNI) contributes to the NAD(+) binding site. The active-site Acyl-thioester intermediate is the Cys-131. NAD(+)-binding positions include 162–170 (SAGPGTRAN) and Asn-289.

This sequence belongs to the acetaldehyde dehydrogenase family. Interacts with MhpE.

The enzyme catalyses acetaldehyde + NAD(+) + CoA = acetyl-CoA + NADH + H(+). Its pathway is aromatic compound metabolism; 3-phenylpropanoate degradation. In terms of biological role, catalyzes the conversion of acetaldehyde to acetyl-CoA, using NAD(+) and coenzyme A. Is the final enzyme in the meta-cleavage pathway for the degradation of aromatic compounds. The sequence is that of Acetaldehyde dehydrogenase from Klebsiella pneumoniae (strain 342).